The chain runs to 392 residues: Phosphopentomutase (392 aa).

Mn(2+) contacts are provided by Asp-10, Asp-282, His-287, Asp-323, His-324, and His-335.

Belongs to the phosphopentomutase family. It depends on Mn(2+) as a cofactor.

It is found in the cytoplasm. It catalyses the reaction 2-deoxy-alpha-D-ribose 1-phosphate = 2-deoxy-D-ribose 5-phosphate. It carries out the reaction alpha-D-ribose 1-phosphate = D-ribose 5-phosphate. It participates in carbohydrate degradation; 2-deoxy-D-ribose 1-phosphate degradation; D-glyceraldehyde 3-phosphate and acetaldehyde from 2-deoxy-alpha-D-ribose 1-phosphate: step 1/2. Functionally, isomerase that catalyzes the conversion of deoxy-ribose 1-phosphate (dRib-1-P) and ribose 1-phosphate (Rib-1-P) to deoxy-ribose 5-phosphate (dRib-5-P) and ribose 5-phosphate (Rib-5-P), respectively. The chain is Phosphopentomutase from Dictyoglomus thermophilum (strain ATCC 35947 / DSM 3960 / H-6-12).